The chain runs to 210 residues: Large ribosomal subunit protein uL22 (210 aa).

Positions 123–210 (NEMTSKETVK…TKSTKKEGSK (88 aa)) are disordered. The span at 126-157 (TSKETVKEPAKKPSAKVEKPAEAKAPKQETST) shows a compositional bias: basic and acidic residues. The span at 158 to 185 (KKPTTTTESKPKTSKAPAQKQAAKVAKP) shows a compositional bias: low complexity.

This sequence belongs to the universal ribosomal protein uL22 family. As to quaternary structure, part of the 50S ribosomal subunit.

Functionally, this protein binds specifically to 23S rRNA; its binding is stimulated by other ribosomal proteins, e.g. L4, L17, and L20. It is important during the early stages of 50S assembly. It makes multiple contacts with different domains of the 23S rRNA in the assembled 50S subunit and ribosome. Its function is as follows. The globular domain of the protein is located near the polypeptide exit tunnel on the outside of the subunit, while an extended beta-hairpin is found that lines the wall of the exit tunnel in the center of the 70S ribosome. The chain is Large ribosomal subunit protein uL22 from Metamycoplasma arthritidis (strain 158L3-1) (Mycoplasma arthritidis).